A 349-amino-acid polypeptide reads, in one-letter code: Isopentenyl-diphosphate delta-isomerase (349 aa).

8 to 9 is a substrate binding site; it reads RK. Residues Ser-66, 67–69, Ser-97, and Asn-125 contribute to the FMN site; that span reads SMT. Substrate is bound at residue 97–99; it reads STR. Gln-160 provides a ligand contact to substrate. Glu-161 lines the Mg(2+) pocket. FMN contacts are provided by residues Lys-192, Thr-222, 272–274, and 293–294; these read GMK and AR.

It belongs to the IPP isomerase type 2 family. As to quaternary structure, homooctamer. Dimer of tetramers. It depends on FMN as a cofactor. Requires NADPH as cofactor. Mg(2+) serves as cofactor.

It localises to the cytoplasm. The catalysed reaction is isopentenyl diphosphate = dimethylallyl diphosphate. Its function is as follows. Involved in the biosynthesis of isoprenoids. Catalyzes the 1,3-allylic rearrangement of the homoallylic substrate isopentenyl (IPP) to its allylic isomer, dimethylallyl diphosphate (DMAPP). In Oceanobacillus iheyensis (strain DSM 14371 / CIP 107618 / JCM 11309 / KCTC 3954 / HTE831), this protein is Isopentenyl-diphosphate delta-isomerase.